The chain runs to 360 residues: BOLA class I histocompatibility antigen, alpha chain BL3-6 (360 aa).

The signal sequence occupies residues 1-21; that stretch reads MGPRALLLLLSGVLILTETRA. The interval 22–111 is alpha-1; sequence GSHSLRYFST…LRGYYNQSEA (90 aa). At 22–308 the chain is on the extracellular side; that stretch reads GSHSLRYFST…QPSFLTMGII (287 aa). N-linked (GlcNAc...) asparagine glycosylation is present at Asn-107. Residues 112–203 form an alpha-2 region; sequence GSHTLQWMSG…ENGKDTLLRA (92 aa). 2 disulfide bridges follow: Cys-122-Cys-185 and Cys-224-Cys-280. Positions 204–295 are alpha-3; sequence DPPKAHVTHH…GLQEPLTLRW (92 aa). One can recognise an Ig-like C1-type domain in the interval 206–292; that stretch reads PKAHVTHHPI…QHEGLQEPLT (87 aa). The segment at 296 to 308 is connecting peptide; the sequence is EPPQPSFLTMGII. Residues 309-328 traverse the membrane as a helical segment; it reads VGLVLLVVTGAVVAGVVICM. Topologically, residues 329 to 360 are cytoplasmic; it reads KKRSGEKGGNYIQASSSDSAQGSDVSLTVPKV. The segment at 340–360 is disordered; the sequence is IQASSSDSAQGSDVSLTVPKV. Low complexity predominate over residues 341-354; that stretch reads QASSSDSAQGSDVS. Phosphoserine occurs at positions 351 and 354.

Belongs to the MHC class I family. As to quaternary structure, heterodimer of an alpha chain and a beta chain (beta-2-microglobulin).

It localises to the membrane. Its function is as follows. Involved in the presentation of foreign antigens to the immune system. The chain is BOLA class I histocompatibility antigen, alpha chain BL3-6 from Bos taurus (Bovine).